Here is a 286-residue protein sequence, read N- to C-terminus: Bifunctional protein FolD (286 aa).

NADP(+)-binding positions include G166 to S168 and I232.

This sequence belongs to the tetrahydrofolate dehydrogenase/cyclohydrolase family. Homodimer.

It carries out the reaction (6R)-5,10-methylene-5,6,7,8-tetrahydrofolate + NADP(+) = (6R)-5,10-methenyltetrahydrofolate + NADPH. It catalyses the reaction (6R)-5,10-methenyltetrahydrofolate + H2O = (6R)-10-formyltetrahydrofolate + H(+). It functions in the pathway one-carbon metabolism; tetrahydrofolate interconversion. Catalyzes the oxidation of 5,10-methylenetetrahydrofolate to 5,10-methenyltetrahydrofolate and then the hydrolysis of 5,10-methenyltetrahydrofolate to 10-formyltetrahydrofolate. The polypeptide is Bifunctional protein FolD (Blochmanniella pennsylvanica (strain BPEN)).